Reading from the N-terminus, the 107-residue chain is Precursor of CEP14 (107 aa).

The first 21 residues, 1–21 (MAVRLIPTIWLFIVFAVIVSA), serve as a signal peptide directing secretion. Residues 22–92 (LPSLVSSRKL…GKLRSRHLST (71 aa)) constitute a propeptide that is removed on maturation. Asparagine 39 carries N-linked (GlcNAc...) asparagine glycosylation. The tract at residues 43-76 (REEEKSHMPHVTKTSTLSALPKGKIPNSTPSKKG) is disordered. A hydroxyproline mark is found at proline 101 and proline 103.

The protein belongs to the C-terminally encoded plant signaling peptide (CEP) family. In terms of assembly, interacts with CEP receptors (e.g. CEPR1 and CEPR2). In terms of processing, the mature small signaling peptide is generated by proteolytic processing of the longer precursor.

It is found in the secreted. Its subcellular location is the extracellular space. It localises to the apoplast. Its function is as follows. Extracellular signaling peptide that may regulate primary root growth rate and systemic nitrogen (N)-demand signaling. The polypeptide is Precursor of CEP14 (Arabidopsis thaliana (Mouse-ear cress)).